Consider the following 199-residue polypeptide: N-(5'-phosphoribosyl)anthranilate isomerase (199 aa).

This sequence belongs to the TrpF family.

The catalysed reaction is N-(5-phospho-beta-D-ribosyl)anthranilate = 1-(2-carboxyphenylamino)-1-deoxy-D-ribulose 5-phosphate. Its pathway is amino-acid biosynthesis; L-tryptophan biosynthesis; L-tryptophan from chorismate: step 3/5. The polypeptide is N-(5'-phosphoribosyl)anthranilate isomerase (Campylobacter jejuni subsp. jejuni serotype O:6 (strain 81116 / NCTC 11828)).